The chain runs to 540 residues: Phosphoenolpyruvate carboxykinase (ATP) (540 aa).

R65 lines the substrate pocket. The residue at position 87 (K87) is an N6-acetyllysine. Substrate contacts are provided by Y207 and K213. Residues K213, H232, and 248-256 (GLSGTGKTT) each bind ATP. The Mn(2+) site is built by K213 and H232. A Mn(2+)-binding site is contributed by D269. ATP is bound by residues E297, R333, 449-450 (RI), and T455. R333 is a binding site for substrate. An N6-acetyllysine modification is found at K523.

This sequence belongs to the phosphoenolpyruvate carboxykinase (ATP) family. In terms of assembly, monomer. Mn(2+) serves as cofactor.

The protein localises to the cytoplasm. The enzyme catalyses oxaloacetate + ATP = phosphoenolpyruvate + ADP + CO2. It participates in carbohydrate biosynthesis; gluconeogenesis. Functionally, involved in the gluconeogenesis. Catalyzes the conversion of oxaloacetate (OAA) to phosphoenolpyruvate (PEP) through direct phosphoryl transfer between the nucleoside triphosphate and OAA. This is Phosphoenolpyruvate carboxykinase (ATP) from Escherichia coli O127:H6 (strain E2348/69 / EPEC).